Here is an 86-residue protein sequence, read N- to C-terminus: Large ribosomal subunit protein uL23 (86 aa).

This sequence belongs to the universal ribosomal protein uL23 family. In terms of assembly, part of the 50S ribosomal subunit. Contacts protein L29.

Binds to 23S rRNA. One of the proteins that surrounds the polypeptide exit tunnel on the outside of the ribosome. This Methanothermobacter thermautotrophicus (strain ATCC 29096 / DSM 1053 / JCM 10044 / NBRC 100330 / Delta H) (Methanobacterium thermoautotrophicum) protein is Large ribosomal subunit protein uL23.